The primary structure comprises 465 residues: FeMo cofactor biosynthesis protein FixZ (465 aa).

The segment at 1 to 36 is disordered; the sequence is MSEPEIKVGKTSSALFDRAPMAPSMPGGRASSSHGL. Residues 61–312 form the Radical SAM core domain; it reads HHYFARMHXX…MRHCQQCRAD (252 aa). [4Fe-4S] cluster contacts are provided by cysteine 75 and cysteine 79. An S-adenosyl-L-methionine-binding site is contributed by tyrosine 81. Cysteine 82 is a [4Fe-4S] cluster binding site. Residues glycine 129, threonine 181, and isoleucine 233 each contribute to the S-adenosyl-L-methionine site. Residues cysteine 306 and cysteine 309 each coordinate [4Fe-4S] cluster.

The protein belongs to the radical SAM superfamily. NifB family. [4Fe-4S] cluster serves as cofactor.

The protein operates within cofactor biosynthesis; Fe-Mo cofactor biosynthesis. Involved in the biosynthesis of the iron-molybdenum cofactor (FeMo-co or M-cluster) found in the dinitrogenase enzyme of the nitrogenase complex in nitrogen-fixing microorganisms. Catalyzes the crucial step of radical SAM-dependent carbide insertion that occurs concomitant with the insertion of a 9th sulfur and the rearrangement/coupling of two [4Fe-4S] clusters into a [8Fe-9S-C] cluster, the precursor to the M-cluster. This chain is FeMo cofactor biosynthesis protein FixZ (fixZ), found in Rhizobium leguminosarum.